The sequence spans 156 residues: Histone acetyltransferase HPA2 (156 aa).

The 148-residue stretch at 9-156 (ITVRFVTEND…PKILYKRKGY (148 aa)) folds into the N-acetyltransferase domain. 93 to 106 (LYVDENSRVKGAGG) contacts acetyl-CoA.

It belongs to the acetyltransferase family. GNAT subfamily. As to quaternary structure, forms homodimers in the absence, and homotetramers in the presence of acetyl-CoA. In terms of processing, autoacetylates in an intermolecular reaction.

It carries out the reaction L-lysyl-[protein] + acetyl-CoA = N(6)-acetyl-L-lysyl-[protein] + CoA + H(+). Its function is as follows. N-acetyltransferase that acetylates histone H3 at 'Lys-14' and histone H4 at 'Lys-5' and 'Lys-12'. Also acetylates polyamines like putrescine, spermidine and spermine, and certain other small basic proteins like nuclear HMG proteins. In Saccharomyces cerevisiae (strain ATCC 204508 / S288c) (Baker's yeast), this protein is Histone acetyltransferase HPA2.